The chain runs to 538 residues: Cytochrome P450 734A4 (538 aa).

A helical membrane pass occupies residues 5 to 27; sequence VAVAAAVLLLLHVAARVADAVWW. C480 lines the heme pocket.

Belongs to the cytochrome P450 family. Requires heme as cofactor. As to expression, expressed in roots, shoot apex, leaf sheaths, leaf blades, internodes and panicles.

It localises to the membrane. In terms of biological role, cytochrome P450 involved in brassinosteroids (BRs) inactivation and regulation of BRs homeostasis. Is a multifunctional and multisubstrate enzyme that controls the endogenous bioactive BR content both by direct inactivation of castasterone (CS) and by decreasing the levels of BR precursors. Catalyzes the oxidation of carbon 22 hydroxylated BR intermediates to produce C26 oxidized metabolites. The protein is Cytochrome P450 734A4 (CYP734A4) of Oryza sativa subsp. japonica (Rice).